Here is a 460-residue protein sequence, read N- to C-terminus: Glycogen synthase (460 aa).

Residue Lys15 coordinates ADP-alpha-D-glucose.

The protein belongs to the glycosyltransferase 1 family. Bacterial/plant glycogen synthase subfamily.

The enzyme catalyses [(1-&gt;4)-alpha-D-glucosyl](n) + ADP-alpha-D-glucose = [(1-&gt;4)-alpha-D-glucosyl](n+1) + ADP + H(+). Its pathway is glycan biosynthesis; glycogen biosynthesis. Functionally, synthesizes alpha-1,4-glucan chains using ADP-glucose. The polypeptide is Glycogen synthase (Trichodesmium erythraeum (strain IMS101)).